The primary structure comprises 157 residues: Glutathione peroxidase (157 aa).

Residue Cys35 is part of the active site.

It belongs to the glutathione peroxidase family.

It carries out the reaction 2 glutathione + H2O2 = glutathione disulfide + 2 H2O. The polypeptide is Glutathione peroxidase (gpo) (Lactococcus lactis subsp. cremoris (strain MG1363)).